The sequence spans 425 residues: UPF0597 protein UNCMA_16400 (425 aa).

Belongs to the UPF0597 family.

The polypeptide is UPF0597 protein UNCMA_16400 (Methanocella arvoryzae (strain DSM 22066 / NBRC 105507 / MRE50)).